A 242-amino-acid polypeptide reads, in one-letter code: MKKTTKPPTGGYGGSGSHELYQRVKKKAGTIKASSRRWLERHLNDPYVHQSKVDGYRSRAAYKLIEINERYKFLKKGQKVIDLGAAPGGWCQVAERIVGSSNEKPSVVGIDYLHVDPLPRVAMLEMDFLHADAPQKLIETLGTKPDVVLSDMAAPTTGHRQTDHLRTIYLCEVAADFALSVLKPGGHFLAKAFQGGAENTLLAILKQHFKKVYHVKPPASRSESVELYLLALEFKGKTKIQE.

Residues Gly88, Trp90, Asp111, Asp127, and Asp151 each coordinate S-adenosyl-L-methionine. Lys191 (proton acceptor) is an active-site residue.

The protein belongs to the class I-like SAM-binding methyltransferase superfamily. RNA methyltransferase RlmE family.

It is found in the cytoplasm. The catalysed reaction is uridine(2552) in 23S rRNA + S-adenosyl-L-methionine = 2'-O-methyluridine(2552) in 23S rRNA + S-adenosyl-L-homocysteine + H(+). In terms of biological role, specifically methylates the uridine in position 2552 of 23S rRNA at the 2'-O position of the ribose in the fully assembled 50S ribosomal subunit. The sequence is that of Ribosomal RNA large subunit methyltransferase E from Bartonella tribocorum (strain CIP 105476 / IBS 506).